The primary structure comprises 440 residues: uncharacterized protein (440 aa).

This is an uncharacterized protein from Rickettsia prowazekii (strain Madrid E).